The following is a 402-amino-acid chain: 4-hydroxy-3-methylbut-2-enyl diphosphate reductase (402 aa).

C66 is a binding site for [4Fe-4S] cluster. H96 is a binding site for (2E)-4-hydroxy-3-methylbut-2-enyl diphosphate. H96 is a binding site for dimethylallyl diphosphate. H96 is an isopentenyl diphosphate binding site. C157 provides a ligand contact to [4Fe-4S] cluster. Residue H185 coordinates (2E)-4-hydroxy-3-methylbut-2-enyl diphosphate. H185 is a dimethylallyl diphosphate binding site. H185 provides a ligand contact to isopentenyl diphosphate. The active-site Proton donor is E187. T250 provides a ligand contact to (2E)-4-hydroxy-3-methylbut-2-enyl diphosphate. C288 contributes to the [4Fe-4S] cluster binding site. The (2E)-4-hydroxy-3-methylbut-2-enyl diphosphate site is built by S317, S318, N319, and S379. Dimethylallyl diphosphate is bound by residues S317, S318, N319, and S379. S317, S318, N319, and S379 together coordinate isopentenyl diphosphate.

The protein belongs to the IspH family. The cofactor is [4Fe-4S] cluster.

The catalysed reaction is isopentenyl diphosphate + 2 oxidized [2Fe-2S]-[ferredoxin] + H2O = (2E)-4-hydroxy-3-methylbut-2-enyl diphosphate + 2 reduced [2Fe-2S]-[ferredoxin] + 2 H(+). It catalyses the reaction dimethylallyl diphosphate + 2 oxidized [2Fe-2S]-[ferredoxin] + H2O = (2E)-4-hydroxy-3-methylbut-2-enyl diphosphate + 2 reduced [2Fe-2S]-[ferredoxin] + 2 H(+). Its pathway is isoprenoid biosynthesis; dimethylallyl diphosphate biosynthesis; dimethylallyl diphosphate from (2E)-4-hydroxy-3-methylbutenyl diphosphate: step 1/1. It functions in the pathway isoprenoid biosynthesis; isopentenyl diphosphate biosynthesis via DXP pathway; isopentenyl diphosphate from 1-deoxy-D-xylulose 5-phosphate: step 6/6. In terms of biological role, catalyzes the conversion of 1-hydroxy-2-methyl-2-(E)-butenyl 4-diphosphate (HMBPP) into a mixture of isopentenyl diphosphate (IPP) and dimethylallyl diphosphate (DMAPP). Acts in the terminal step of the DOXP/MEP pathway for isoprenoid precursor biosynthesis. The protein is 4-hydroxy-3-methylbut-2-enyl diphosphate reductase of Gloeothece citriformis (strain PCC 7424) (Cyanothece sp. (strain PCC 7424)).